The sequence spans 1021 residues: DNA-directed RNA polymerase 2B, chloroplastic/mitochondrial (1021 aa).

A disordered region spans residues 315-337; the sequence is KKQKAEKDKQKEDGEHVTQEQEK. Catalysis depends on residues Asp722, Lys797, and Asp954.

The protein belongs to the phage and mitochondrial RNA polymerase family.

The protein localises to the plastid. It localises to the chloroplast. Its subcellular location is the mitochondrion. The catalysed reaction is RNA(n) + a ribonucleoside 5'-triphosphate = RNA(n+1) + diphosphate. Its function is as follows. DNA-dependent RNA polymerase catalyzes the transcription of DNA into RNA using the four ribonucleoside triphosphates as substrates. The chain is DNA-directed RNA polymerase 2B, chloroplastic/mitochondrial (RPOT2-TOM) from Nicotiana tabacum (Common tobacco).